Reading from the N-terminus, the 448-residue chain is Vacuolar amino acid transporter 6 (448 aa).

Residues 1-7 lie on the Cytoplasmic side of the membrane; that stretch reads MVASIRS. Residues 8–28 form a helical membrane-spanning segment; sequence GVLTLLHTACGAGILAMPYAF. At 29–32 the chain is on the vacuolar side; the sequence is KPFG. A helical membrane pass occupies residues 33-53; it reads LIPGVIMIVLCGACAMQSLFI. The Cytoplasmic segment spans residues 54-80; sequence QARVAKYVPQGRASFSALTRLINPNLG. The helical transmembrane segment at 81–101 threads the bilayer; it reads IVFDLAIAIKCFGVGVSYMIV. Topologically, residues 102–125 are vacuolar; sequence VGDLMPQIMSVWTRNAWLLNRNVQ. Residues 126-146 traverse the membrane as a helical segment; sequence ISLIMLFFVAPLSFLKKLNSL. Topologically, residues 147–150 are cytoplasmic; it reads RYAS. Residues 151-171 form a helical membrane-spanning segment; it reads MVAISSVAYLCVLVLLHYVAP. The Vacuolar segment spans residues 172 to 195; it reads SDEILRLKGRISYLLPPQSHDLNV. Residues 196–216 form a helical membrane-spanning segment; that stretch reads LNTLPIFVFAYTCHHNMFSII. At 217–229 the chain is on the cytoplasmic side; sequence NEQRSSRFEHVMK. A helical transmembrane segment spans residues 230-250; it reads IPLIAISLALILYIAIGCAGY. The Vacuolar portion of the chain corresponds to 251–267; sequence LTFGDNIIGNIIMLYPQ. Residues 268-288 form a helical membrane-spanning segment; sequence AVSSTIGRIAIVLLVMLAFPL. At 289 to 357 the chain is on the cytoplasmic side; the sequence is QCHPARASIH…PKETPLRGKS (69 aa). Serine 344 is modified (phosphoserine). A helical membrane pass occupies residues 358–378; sequence FIVITCSILVASYLVAISVSS. Over 379–381 the chain is Vacuolar; it reads LAR. The helical transmembrane segment at 382-402 threads the bilayer; the sequence is VLAIVGATGSTSISFILPGLF. Over 403 to 424 the chain is Cytoplasmic; it reads GYKLIGTEHKTAVPLTTKIFKY. A helical membrane pass occupies residues 425–445; sequence TGLLLFIWGLIIMITCLTAAL. The Vacuolar portion of the chain corresponds to 446 to 448; the sequence is KLN.

The protein belongs to the amino acid/polyamine transporter 2 family.

Its subcellular location is the vacuole membrane. In terms of biological role, involved in amino acid efflux from the vacuole to the cytoplasm. Capable of transporting aspartate and glutamate. Requires ATP for function. The protein is Vacuolar amino acid transporter 6 (AVT6) of Saccharomyces cerevisiae (strain ATCC 204508 / S288c) (Baker's yeast).